The chain runs to 190 residues: Adenylate kinase (190 aa).

Residue 11–16 (GAGKGT) participates in ATP binding. Residues 31 to 60 (STGDIFRFNLKNDTELGKQARVFMDNGELV) are NMP. Residues Thr-32, Arg-37, 58 to 60 (ELV), 86 to 89 (GYPR), and Gln-93 each bind AMP. The segment at 127–137 (ERGKTSGRADD) is LID. Residue Arg-128 coordinates ATP. AMP is bound by residues Arg-134 and Arg-146. Residue Gly-174 coordinates ATP.

This sequence belongs to the adenylate kinase family. As to quaternary structure, monomer.

It is found in the cytoplasm. The catalysed reaction is AMP + ATP = 2 ADP. The protein operates within purine metabolism; AMP biosynthesis via salvage pathway; AMP from ADP: step 1/1. In terms of biological role, catalyzes the reversible transfer of the terminal phosphate group between ATP and AMP. Plays an important role in cellular energy homeostasis and in adenine nucleotide metabolism. The protein is Adenylate kinase of Flavobacterium johnsoniae (strain ATCC 17061 / DSM 2064 / JCM 8514 / BCRC 14874 / CCUG 350202 / NBRC 14942 / NCIMB 11054 / UW101) (Cytophaga johnsonae).